A 182-amino-acid polypeptide reads, in one-letter code: Adenine phosphoribosyltransferase (182 aa).

Belongs to the purine/pyrimidine phosphoribosyltransferase family. In terms of assembly, homodimer.

The protein localises to the cytoplasm. It catalyses the reaction AMP + diphosphate = 5-phospho-alpha-D-ribose 1-diphosphate + adenine. The protein operates within purine metabolism; AMP biosynthesis via salvage pathway; AMP from adenine: step 1/1. Its function is as follows. Catalyzes a salvage reaction resulting in the formation of AMP, that is energically less costly than de novo synthesis. This is Adenine phosphoribosyltransferase from Wolinella succinogenes (strain ATCC 29543 / DSM 1740 / CCUG 13145 / JCM 31913 / LMG 7466 / NCTC 11488 / FDC 602W) (Vibrio succinogenes).